Here is a 1161-residue protein sequence, read N- to C-terminus: DNA-directed RNA polymerase subunit beta (1161 aa).

This sequence belongs to the RNA polymerase beta chain family. As to quaternary structure, the RNAP catalytic core consists of 2 alpha, 1 beta, 1 beta' and 1 omega subunit. When a sigma factor is associated with the core the holoenzyme is formed, which can initiate transcription.

The enzyme catalyses RNA(n) + a ribonucleoside 5'-triphosphate = RNA(n+1) + diphosphate. Functionally, DNA-dependent RNA polymerase catalyzes the transcription of DNA into RNA using the four ribonucleoside triphosphates as substrates. The polypeptide is DNA-directed RNA polymerase subunit beta (Streptomyces avermitilis (strain ATCC 31267 / DSM 46492 / JCM 5070 / NBRC 14893 / NCIMB 12804 / NRRL 8165 / MA-4680)).